A 133-amino-acid chain; its full sequence is Methylglyoxal synthase (133 aa).

The region spanning 1 to 133 is the MGS-like domain; the sequence is MPPKPRIALI…ARENGAAQAG (133 aa). Residues His12, Lys16, 38–41, and 58–59 each bind substrate; these read TGTT and SG. The Proton donor/acceptor role is filled by Asp64. His91 provides a ligand contact to substrate.

This sequence belongs to the methylglyoxal synthase family.

The enzyme catalyses dihydroxyacetone phosphate = methylglyoxal + phosphate. Catalyzes the formation of methylglyoxal from dihydroxyacetone phosphate. The protein is Methylglyoxal synthase of Cupriavidus taiwanensis (strain DSM 17343 / BCRC 17206 / CCUG 44338 / CIP 107171 / LMG 19424 / R1) (Ralstonia taiwanensis (strain LMG 19424)).